Reading from the N-terminus, the 89-residue chain is Phasin PhaP (89 aa).

2 helix regions span residues 3 to 26 and 39 to 83; these read TQFF…TWME and DTFE…ALRQ.

As to quaternary structure, homotetramer.

The protein localises to the cellular thylakoid membrane. Its subcellular location is the cytoplasm. It functions in the pathway biopolymer metabolism; poly-(R)-3-hydroxybutanoate biosynthesis. Its function is as follows. A phasin, it attaches to the polyhydroxybutyrate (PHB) granule surface regulating the number and size of PHB granules within a cell. It probably also acts as a regulator affecting the biosynthetic activity of PHB synthase in vivo. The protein is Phasin PhaP of Synechocystis sp. (strain ATCC 27184 / PCC 6803 / Kazusa).